The chain runs to 194 residues: DNA replication complex GINS protein PSF3 (194 aa).

Belongs to the GINS3/PSF3 family. Component of the GINS complex which is a heterotetramer of SLD5, PSF1, PSF2 and PSF3.

The protein localises to the nucleus. In terms of biological role, functions as part of the GINS complex which plays an essential role in the initiation of DNA replication by binding to DNA replication origins and facilitating the assembly of the DNA replication machinery. The chain is DNA replication complex GINS protein PSF3 from Saccharomyces cerevisiae (strain ATCC 204508 / S288c) (Baker's yeast).